The sequence spans 135 residues: C-type Lectin CRL (135 aa).

4 disulfide bridges follow: Cys3-Cys14, Cys31-Cys131, Cys38-Cys133, and Cys106-Cys123. The region spanning 10-132 (MNGLCYKIFN…CESKDAFLCQ (123 aa)) is the C-type lectin domain. 5 residues coordinate Ca(2+): Gln96, Asp98, Glu104, Asn119, and Asp120. Positions 96–98 (QPD) match the Galactose-binding motif.

This sequence belongs to the true venom lectin family. Homodimer; disulfide-linked. Expressed by the venom gland.

The protein resides in the secreted. Beta-galactoside and N-acetylgalactosamine (GalNAc) specific C-type lectin. The protein is C-type Lectin CRL of Crotalus ruber ruber (Red diamond rattlesnake).